A 396-amino-acid polypeptide reads, in one-letter code: ATP-dependent RNA helicase eIF4A (396 aa).

The Q motif motif lies at aspartate 23 to glutamine 51. The 171-residue stretch at isoleucine 54–isoleucine 224 folds into the Helicase ATP-binding domain. Alanine 67 to threonine 74 is an ATP binding site. Residues aspartate 172–aspartate 175 carry the DEAD box motif. One can recognise a Helicase C-terminal domain in the interval glycine 235 to isoleucine 396.

Belongs to the DEAD box helicase family. eIF4A subfamily. Component of the eIF4F complex, which composition varies with external and internal environmental conditions. It is composed of at least eIF4A, eIF4E and eIF4G.

It is found in the cytoplasm. It catalyses the reaction ATP + H2O = ADP + phosphate + H(+). In terms of biological role, ATP-dependent RNA helicase which is a subunit of the eIF4F complex involved in cap recognition and is required for mRNA binding to ribosome. In the current model of translation initiation, eIF4A unwinds RNA secondary structures in the 5'-UTR of mRNAs which is necessary to allow efficient binding of the small ribosomal subunit, and subsequent scanning for the initiator codon. The sequence is that of ATP-dependent RNA helicase eIF4A (TIF1) from Pyricularia oryzae (strain 70-15 / ATCC MYA-4617 / FGSC 8958) (Rice blast fungus).